The chain runs to 113 residues: UPF0102 protein SUN_0231 (113 aa).

This sequence belongs to the UPF0102 family.

The protein is UPF0102 protein SUN_0231 of Sulfurovum sp. (strain NBC37-1).